A 359-amino-acid polypeptide reads, in one-letter code: Peptide chain release factor 1 (359 aa).

Position 238 is an N5-methylglutamine (Gln-238).

This sequence belongs to the prokaryotic/mitochondrial release factor family. In terms of processing, methylated by PrmC. Methylation increases the termination efficiency of RF1.

It localises to the cytoplasm. Peptide chain release factor 1 directs the termination of translation in response to the peptide chain termination codons UAG and UAA. The protein is Peptide chain release factor 1 of Rhodococcus jostii (strain RHA1).